Consider the following 303-residue polypeptide: NmrA-like family domain-containing oxidoreductase FVEG_08287 (303 aa).

NADP(+) is bound by residues 8-13, 8-14, 36-39, arginine 37, 56-57, 77-79, and 159-162; these read LGAGEL, LGAGELG, LRPS, QG, IFR, and FMSF.

The protein belongs to the NmrA-type oxidoreductase family.

NmrA-like family domain-containing oxidoreductase; part of the Fusarium detoxification of benzoxazolinone cluster 1 (FDB1) involved in the degradation of benzoxazolinones produced by the host plant. Maize, wheat, and rye produce the 2 benzoxazinone phytoanticipins 2,4-dihy-droxy-7-methoxy-1,4-benzoxazin-3-one (DIMBOA) and 2,4-dihydroxy-1,4-benzoxazin-3-one (DIBOA) that, due to their inherent instability once released, spontaneously degrade to the more stable corresponding benzoxazolinones, 6-methoxy-2-benzoxazolinone (MBOA) and 2-benzoxazolinone (BOA), respectively. The first step in the detoxification of benzoxazolinones involves the hydrolysis of the cyclic ester bond of benzoxazolinones by the FDB1 cluster gamma-lactamase MBL1 to aminophenols. MBL1 is able to convert BOA into 2-aminophenol (2-AP), as well as MBOA into 5-methoxy-2-aminophenol (2-AMP). The FDB2 cluster N-malonyltransferase FDB2/NAT1 then metabolizes aminophenols via N-malonylation to non-toxic malonamic acids. FDB2/NAT1 converts 2-AP into N-(2-hydroxyphenyl) malonamic acid (HPMA) and 2-AMP into N-(2-hydroxy-4-methoxyphenyl) malonamic acid (HMPMA). The duplicated dienlactone hydrolases DLH1 and DLH2 may provide redundant function for hydrolyzing the lactone moiety in the BOA molecule. The roles of the amidases an other enzymes encoded by the 2 FDB clusters have not been identified so far. The sequence is that of NmrA-like family domain-containing oxidoreductase FVEG_08287 from Gibberella moniliformis (strain M3125 / FGSC 7600) (Maize ear and stalk rot fungus).